The primary structure comprises 616 residues: Dihydroxy-acid dehydratase (616 aa).

Residue aspartate 81 participates in Mg(2+) binding. Residue cysteine 122 participates in [2Fe-2S] cluster binding. Mg(2+) is bound by residues aspartate 123 and lysine 124. An N6-carboxylysine modification is found at lysine 124. Cysteine 195 contacts [2Fe-2S] cluster. Glutamate 491 provides a ligand contact to Mg(2+). Serine 517 (proton acceptor) is an active-site residue.

It belongs to the IlvD/Edd family. As to quaternary structure, homodimer. It depends on [2Fe-2S] cluster as a cofactor. Mg(2+) is required as a cofactor.

The catalysed reaction is (2R)-2,3-dihydroxy-3-methylbutanoate = 3-methyl-2-oxobutanoate + H2O. The enzyme catalyses (2R,3R)-2,3-dihydroxy-3-methylpentanoate = (S)-3-methyl-2-oxopentanoate + H2O. It participates in amino-acid biosynthesis; L-isoleucine biosynthesis; L-isoleucine from 2-oxobutanoate: step 3/4. It functions in the pathway amino-acid biosynthesis; L-valine biosynthesis; L-valine from pyruvate: step 3/4. Functionally, functions in the biosynthesis of branched-chain amino acids. Catalyzes the dehydration of (2R,3R)-2,3-dihydroxy-3-methylpentanoate (2,3-dihydroxy-3-methylvalerate) into 2-oxo-3-methylpentanoate (2-oxo-3-methylvalerate) and of (2R)-2,3-dihydroxy-3-methylbutanoate (2,3-dihydroxyisovalerate) into 2-oxo-3-methylbutanoate (2-oxoisovalerate), the penultimate precursor to L-isoleucine and L-valine, respectively. This is Dihydroxy-acid dehydratase from Tolumonas auensis (strain DSM 9187 / NBRC 110442 / TA 4).